A 397-amino-acid polypeptide reads, in one-letter code: Lysophospholipid transporter LplT (397 aa).

Residues 1–17 (MSESVHTNTSLWSKGMK) are Periplasmic-facing. A helical membrane pass occupies residues 18-38 (AVIVAQFLSAFGDNALLFATL). The Cytoplasmic portion of the chain corresponds to 39–52 (ALLNAQFYPEWSQP). Residues 53 to 73 (ILQMVFVGAYILFAPFVGQVA) form a helical membrane-spanning segment. At 74 to 90 (DSFAKGRVMMFANGLKL) the chain is on the periplasmic side. The helical transmembrane segment at 91-111 (LGAASICFGINPFLGYTLVGV) threads the bilayer. At 112 to 144 (GAAAYSPAKYGILGELTTGSKLVKANGLMEAST) the chain is on the cytoplasmic side. Residues 145 to 165 (IAAILLGSVAGGVLADWHVLV) traverse the membrane as a helical segment. Position 166 (Ala166) is a topological domain, periplasmic. A helical membrane pass occupies residues 167–187 (LAACALAYGGAVVANIYIPKL). The Cytoplasmic portion of the chain corresponds to 188 to 226 (AAARPGQSWNLINMTRSFLNACTSLWRNGETRFSLVGTS). The helical transmembrane segment at 227–247 (LFWGAGVTLRFLLVLWVPVAL) threads the bilayer. Topologically, residues 248 to 256 (GITDNATPT) are periplasmic. Residues 257–277 (YLNAMVAIGIVVGAGAAAKLV) traverse the membrane as a helical segment. Residues 278 to 280 (TLE) are Cytoplasmic-facing. A helical membrane pass occupies residues 281-301 (TVSRCMPAGILIGVVVLIFSL). Topologically, residues 302 to 304 (QHE) are periplasmic. A helical membrane pass occupies residues 305–325 (LLPAYALLMLIGVMGGFFVVP). Residues 326–343 (LNALLQERGKKSVGAGNA) lie on the Cytoplasmic side of the membrane. Residues 344–364 (IAVQNLGENSAMLLMLGIYSL) form a helical membrane-spanning segment. Residues 365-366 (AV) are Periplasmic-facing. Residues 367–387 (MIGIPVVPIGIGFGALFALAI) form a helical membrane-spanning segment. The Cytoplasmic portion of the chain corresponds to 388-397 (TALWIWQRRH).

The protein belongs to the major facilitator superfamily. LplT (TC 2.A.1.42) family.

It is found in the cell inner membrane. In terms of biological role, catalyzes the facilitated diffusion of 2-acyl-glycero-3-phosphoethanolamine (2-acyl-GPE) into the cell. The polypeptide is Lysophospholipid transporter LplT (Escherichia coli (strain SE11)).